The primary structure comprises 430 residues: Enolase (430 aa).

Position 163 (Gln-163) interacts with (2R)-2-phosphoglycerate. Glu-205 serves as the catalytic Proton donor. Residues Asp-242, Glu-287, and Asp-314 each contribute to the Mg(2+) site. 4 residues coordinate (2R)-2-phosphoglycerate: Lys-339, Arg-368, Ser-369, and Lys-390. Lys-339 (proton acceptor) is an active-site residue.

This sequence belongs to the enolase family. Mg(2+) serves as cofactor.

It is found in the cytoplasm. The protein localises to the secreted. The protein resides in the cell surface. The catalysed reaction is (2R)-2-phosphoglycerate = phosphoenolpyruvate + H2O. It participates in carbohydrate degradation; glycolysis; pyruvate from D-glyceraldehyde 3-phosphate: step 4/5. Functionally, catalyzes the reversible conversion of 2-phosphoglycerate (2-PG) into phosphoenolpyruvate (PEP). It is essential for the degradation of carbohydrates via glycolysis. The protein is Enolase of Bacillus pumilus (strain SAFR-032).